Consider the following 203-residue polypeptide: MAEGQVLVLDGRGHLLGRLAAIVAKQVLLGRKVVVVRCEGINISGNFYRNKLKYLAFLRKRMNTNPSRGPYHFRAPSRIFWRTVRGMLPHKTKRGQAALDRLKVFDGIPPPYDKKKRMVVPAALKVVRLKPTRKFAYLGRLAHEVGWKYQAVTATLEEKRKEKAKIHYRKKKQLMRLRKQAEKNVEKKISKFTDVLKTHGLLV.

Position 2 is an N-acetylalanine (Ala-2). Arg-59 is modified (citrulline). Ser-77 carries the post-translational modification Phosphoserine. Arg-140 carries the citrulline modification. Lys-191 bears the N6-acetyllysine mark.

The protein belongs to the universal ribosomal protein uL13 family. As to quaternary structure, component of the 60S ribosome. Component of the GAIT complex. Interacts with EIF4G1. Post-translationally, phosphorylation at Ser-77 upon interferon-gamma treatment in monocytes involves a DAPK1-DAPK3 kinase cascade and is causing release from the ribosome, association with the GAIT complex and subsequent involvement in transcript-selective translation inhibition. Citrullinated by PADI4.

Its subcellular location is the cytoplasm. In terms of biological role, associated with ribosomes but is not required for canonical ribosome function and has extra-ribosomal functions. Component of the GAIT (gamma interferon-activated inhibitor of translation) complex which mediates interferon-gamma-induced transcript-selective translation inhibition in inflammation processes. Upon interferon-gamma activation and subsequent phosphorylation dissociates from the ribosome and assembles into the GAIT complex which binds to stem loop-containing GAIT elements in the 3'-UTR of diverse inflammatory mRNAs (such as ceruplasmin) and suppresses their translation. In the GAIT complex interacts with m7G cap-bound eIF4G at or near the eIF3-binding site and blocks the recruitment of the 43S ribosomal complex. Involved in methylation of rRNA. This chain is Large ribosomal subunit protein uL13 (RPL13A), found in Oryctolagus cuniculus (Rabbit).